Consider the following 543-residue polypeptide: Thiamine transport system permease protein ThiP (543 aa).

The next 12 helical transmembrane spans lie at 19 to 39 (VAGG…LLAL), 64 to 84 (FTIW…IPIA), 102 to 122 (LFAL…TSIY), 142 to 162 (DIYG…PLAV), 205 to 225 (GMIG…LTLG), 250 to 270 (AVAL…ILRL), 300 to 320 (IIVI…VVVS), 343 to 363 (LALG…LVAA), 379 to 399 (GASL…FILL), 406 to 426 (FVMA…PFAV), 468 to 488 (GMAF…IALF), and 510 to 530 (FDAA…MMIA). Residues 62–266 (ARFTIWQAVA…QLALTLLILL (205 aa)) enclose the ABC transmembrane type-1 1 domain. Positions 339-530 (IATSLALGFS…VLCLALMMIA (192 aa)) constitute an ABC transmembrane type-1 2 domain.

This sequence belongs to the binding-protein-dependent transport system permease family. CysTW subfamily. As to quaternary structure, the complex is composed of two ATP-binding proteins (ThiQ), two transmembrane proteins (ThiP) and a solute-binding protein (ThiB).

Its subcellular location is the cell inner membrane. Its function is as follows. Part of the ABC transporter complex ThiBPQ involved in thiamine import. Probably responsible for the translocation of the substrate across the membrane. The sequence is that of Thiamine transport system permease protein ThiP (thiP) from Brucella suis biovar 1 (strain 1330).